A 367-amino-acid chain; its full sequence is Chorismate synthase (367 aa).

Arg-48 provides a ligand contact to NADP(+). Residues 125 to 127 (RSS), 243 to 244 (NA), Gly-283, 298 to 302 (KPTSS), and Arg-324 each bind FMN.

It belongs to the chorismate synthase family. As to quaternary structure, homotetramer. FMNH2 is required as a cofactor.

The enzyme catalyses 5-O-(1-carboxyvinyl)-3-phosphoshikimate = chorismate + phosphate. The protein operates within metabolic intermediate biosynthesis; chorismate biosynthesis; chorismate from D-erythrose 4-phosphate and phosphoenolpyruvate: step 7/7. Its function is as follows. Catalyzes the anti-1,4-elimination of the C-3 phosphate and the C-6 proR hydrogen from 5-enolpyruvylshikimate-3-phosphate (EPSP) to yield chorismate, which is the branch point compound that serves as the starting substrate for the three terminal pathways of aromatic amino acid biosynthesis. This reaction introduces a second double bond into the aromatic ring system. The polypeptide is Chorismate synthase (Psychrobacter sp. (strain PRwf-1)).